Here is a 493-residue protein sequence, read N- to C-terminus: Glutamate--tRNA ligase (493 aa).

Residues 10–20 (PSPTGDPHVGT) carry the 'HIGH' region motif. The 'KMSKS' region signature appears at 251 to 255 (KLSKR). K254 provides a ligand contact to ATP.

This sequence belongs to the class-I aminoacyl-tRNA synthetase family. Glutamate--tRNA ligase type 1 subfamily. As to quaternary structure, monomer.

It localises to the cytoplasm. It carries out the reaction tRNA(Glu) + L-glutamate + ATP = L-glutamyl-tRNA(Glu) + AMP + diphosphate. In terms of biological role, catalyzes the attachment of glutamate to tRNA(Glu) in a two-step reaction: glutamate is first activated by ATP to form Glu-AMP and then transferred to the acceptor end of tRNA(Glu). This is Glutamate--tRNA ligase from Pseudomonas entomophila (strain L48).